A 217-amino-acid polypeptide reads, in one-letter code: tRNA (guanine-N(7)-)-methyltransferase (217 aa).

Residues Glu-44, Glu-69, Asp-96, and Asp-118 each contribute to the S-adenosyl-L-methionine site. Asp-118 is a catalytic residue. Residues Lys-122, Asp-154, and 191–194 (TEYE) each bind substrate.

The protein belongs to the class I-like SAM-binding methyltransferase superfamily. TrmB family.

It carries out the reaction guanosine(46) in tRNA + S-adenosyl-L-methionine = N(7)-methylguanosine(46) in tRNA + S-adenosyl-L-homocysteine. It participates in tRNA modification; N(7)-methylguanine-tRNA biosynthesis. Catalyzes the formation of N(7)-methylguanine at position 46 (m7G46) in tRNA. The polypeptide is tRNA (guanine-N(7)-)-methyltransferase (Bacillus cytotoxicus (strain DSM 22905 / CIP 110041 / 391-98 / NVH 391-98)).